A 91-amino-acid chain; its full sequence is Putative membrane protein insertion efficiency factor (91 aa).

It belongs to the UPF0161 family.

The protein resides in the cell inner membrane. Could be involved in insertion of integral membrane proteins into the membrane. The polypeptide is Putative membrane protein insertion efficiency factor (Saccharophagus degradans (strain 2-40 / ATCC 43961 / DSM 17024)).